We begin with the raw amino-acid sequence, 418 residues long: Dihydrolipoyllysine-residue acetyltransferase component of pyruvate dehydrogenase complex (418 aa).

The Lipoyl-binding domain maps to 2–78 (PIKLLMPALS…PVNSLIAVLI (77 aa)). Residue Lys43 is modified to N6-lipoyllysine. In terms of domain architecture, Peripheral subunit-binding (PSBD) spans 133–170 (FASPLAKRLAKIQNVRIEEIKGSGPHGRIIKQDVLSHK). His388 is an active-site residue.

It belongs to the 2-oxoacid dehydrogenase family. As to quaternary structure, forms a 24-polypeptide structural core with octahedral symmetry. (R)-lipoate serves as cofactor.

It catalyses the reaction N(6)-[(R)-dihydrolipoyl]-L-lysyl-[protein] + acetyl-CoA = N(6)-[(R)-S(8)-acetyldihydrolipoyl]-L-lysyl-[protein] + CoA. Functionally, the pyruvate dehydrogenase complex catalyzes the overall conversion of pyruvate to acetyl-CoA and CO(2). It contains multiple copies of three enzymatic components: pyruvate dehydrogenase (E1), dihydrolipoamide acetyltransferase (E2) and lipoamide dehydrogenase (E3). This is Dihydrolipoyllysine-residue acetyltransferase component of pyruvate dehydrogenase complex (pdhC) from Rickettsia bellii (strain RML369-C).